Reading from the N-terminus, the 350-residue chain is dTDP-D-glucose 4,6-dehydratase (350 aa).

Residue Thr-142 coordinates substrate. The active-site Proton donor is Asp-143. Residues Glu-144 and Tyr-166 each act as proton acceptor in the active site.

It belongs to the NAD(P)-dependent epimerase/dehydratase family. dTDP-glucose dehydratase subfamily. The cofactor is NAD(+).

It carries out the reaction dTDP-alpha-D-glucose = dTDP-4-dehydro-6-deoxy-alpha-D-glucose + H2O. The sequence is that of dTDP-D-glucose 4,6-dehydratase (TGDS) from Homo sapiens (Human).